A 630-amino-acid chain; its full sequence is 1,4-alpha-glucan branching enzyme GlgB (630 aa).

Asp308 (nucleophile) is an active-site residue. The Proton donor role is filled by Glu361.

The protein belongs to the glycosyl hydrolase 13 family. GlgB subfamily. Monomer.

It carries out the reaction Transfers a segment of a (1-&gt;4)-alpha-D-glucan chain to a primary hydroxy group in a similar glucan chain.. It participates in glycan biosynthesis; glycogen biosynthesis. Catalyzes the formation of the alpha-1,6-glucosidic linkages in glycogen by scission of a 1,4-alpha-linked oligosaccharide from growing alpha-1,4-glucan chains and the subsequent attachment of the oligosaccharide to the alpha-1,6 position. This Halothermothrix orenii (strain H 168 / OCM 544 / DSM 9562) protein is 1,4-alpha-glucan branching enzyme GlgB.